We begin with the raw amino-acid sequence, 158 residues long: Ribosome maturation factor RimP (158 aa).

It belongs to the RimP family.

Its subcellular location is the cytoplasm. Functionally, required for maturation of 30S ribosomal subunits. In Pseudomonas syringae pv. tomato (strain ATCC BAA-871 / DC3000), this protein is Ribosome maturation factor RimP.